The following is a 570-amino-acid chain: MDFPDKMDLENERVLKLIFPDGVPDNLRGNPELDNYLAKLGTCKVEQLKKEQTRLAEEARTILEQTQDLAISNYRTFITTAENSRSIFSEFLRSEQQLDTLVSKLPDLSVQCERFLQDSAELNEQRRLNSITLQKNAQLLEVLELPQLMERCIREGRYEEALELAAYATRLGQHQGHIPVVTSIVRSVEALWHNMLVQLVAQLRTDLQLPKCLQIVGYLRRMQAFGDNELRLKFLQARDAWLTSCLEAIPTADAQQHLSKTIEITRINLFNIITQYRAIFPEDEGTLKTQSSLRPLQGVSCNGDRLFQAWLHNKISDFLQTLERDLQLGVGSVETVLGQCMYFGLSFSRVGADFRALMAPIFVGVIRRRFESSVEQVDEQFERELERFTLINKVALHSHARKQVDPEQESYAPPEALLDFYPLAALCNGYLSALNELRLCAPLALATDVTRCLQHSLQQAAQRVLAFYRQEQQAFAGSEREAFVRLCSCLAYDLVPYIQRCIHGVFPPQSLTVHLGISLLQLEQQQLTYLQQTRILEPLKHLLPTKALVQPQDKVMEAKPSAGVPVTAEG.

The protein belongs to the COG8 family. Component of the conserved oligomeric Golgi complex which is composed of eight different subunits and is required for normal Golgi morphology and localization.

It localises to the golgi apparatus membrane. Required for normal Golgi function. The chain is Conserved oligomeric Golgi complex subunit 8 from Drosophila melanogaster (Fruit fly).